A 62-amino-acid chain; its full sequence is Guanine nucleotide-binding protein subunit gamma (62 aa).

The tract at residues 40–62 is disordered; sequence DMLVSGPTDQHNPFQEKKSCSVL. A compositionally biased stretch (basic and acidic residues) spans 53 to 62; that stretch reads FQEKKSCSVL. Residue C59 is modified to Cysteine methyl ester. Residue C59 is the site of S-geranylgeranyl cysteine attachment. The propeptide at 60 to 62 is removed in mature form; sequence SVL.

It belongs to the G protein gamma family. G proteins are composed of 3 units, alpha, beta and gamma. Interacts with gpb-1 and gpb-2. In terms of tissue distribution, predominantly expressed in the central nervous system.

The protein localises to the cell membrane. Functionally, guanine nucleotide-binding proteins (G proteins) are involved as a modulator or transducer in various transmembrane signaling systems. The beta and gamma chains are required for the GTPase activity, for replacement of GDP by GTP, and for G protein-effector interaction. The polypeptide is Guanine nucleotide-binding protein subunit gamma (gpc-1) (Caenorhabditis elegans).